The chain runs to 216 residues: Uracil phosphoribosyltransferase (216 aa).

Residues R85, R110, and 135–143 contribute to the 5-phospho-alpha-D-ribose 1-diphosphate site; that span reads DPMVATGYS. Uracil contacts are provided by residues I200 and 205–207; that span reads GDA. D206 is a 5-phospho-alpha-D-ribose 1-diphosphate binding site.

The protein belongs to the UPRTase family. Mg(2+) serves as cofactor.

It catalyses the reaction UMP + diphosphate = 5-phospho-alpha-D-ribose 1-diphosphate + uracil. It participates in pyrimidine metabolism; UMP biosynthesis via salvage pathway; UMP from uracil: step 1/1. Allosterically activated by GTP. Catalyzes the conversion of uracil and 5-phospho-alpha-D-ribose 1-diphosphate (PRPP) to UMP and diphosphate. The chain is Uracil phosphoribosyltransferase from Burkholderia ambifaria (strain MC40-6).